A 557-amino-acid polypeptide reads, in one-letter code: MTAQGFLLIATFLLVLMVLARPLGSGLARLINDIPLPGTAGVERVLFRLPGVSDSEMNWKQYLCAILGLNMLGLAVLFFMLLGQHYLPLNPQQLPGLSWDLALNTAVSFVTNTNWQSYSGETTLSYFSQMAGLTVQNFLSAASGIAVIFALIRAFTRQSMSTLGNAWVDLLRITLWVLVPVALLIALFFIQQGALQNFLPYQAVNTVEGAQQLLPMGPVASQEAIKMLGTNGGGFFNANSSHPFENPTALTNFVQMLAIFLIPTALCFAFGEVAGDRRQGRMLLWAMSVIFVICVGVVMWAEVQGNPHLLALGADSSINMEGKESRFGVLVSSLFAVVTTAASCGAVIAMHDSFTALGGMVPMWLMQIGEVVFGGVGSGLYGMMLFVLLAVFIAGLMIGRTPEYLGKKIDVREMKLTALAILVTPTLVLMGAALAMMTDAGRSAMLNPGPHGFSEVLYAVSSAANNNGSAFAGLSANSPFWNCLLAFCMFVGRFGVIIPVMAIAGSLVSKKSQPASSGTLPTHGPLFVGLLIGTVLLVGALTFIPALALGPVAEYLS.

The next 12 membrane-spanning stretches (helical) occupy residues G5 to S25, L63 to G83, G132 to I152, L170 to I190, F253 to V273, L283 to V303, V329 to A349, A356 to V376, G379 to G399, L416 to M436, L484 to A504, and L526 to A546.

The protein belongs to the KdpA family. In terms of assembly, the system is composed of three essential subunits: KdpA, KdpB and KdpC.

The protein resides in the cell inner membrane. Functionally, part of the high-affinity ATP-driven potassium transport (or Kdp) system, which catalyzes the hydrolysis of ATP coupled with the electrogenic transport of potassium into the cytoplasm. This subunit binds the periplasmic potassium ions and delivers the ions to the membrane domain of KdpB through an intramembrane tunnel. The chain is Potassium-transporting ATPase potassium-binding subunit from Escherichia coli O17:K52:H18 (strain UMN026 / ExPEC).